The chain runs to 431 residues: Tol-Pal system protein TolB (431 aa).

The signal sequence occupies residues 1–26 (MRLMTKLGFRALVASCLIAAGAAANA). The tract at residues 411–431 (PQILSVQGGSVREPSWGPFMQ) is disordered.

Belongs to the TolB family. In terms of assembly, the Tol-Pal system is composed of five core proteins: the inner membrane proteins TolA, TolQ and TolR, the periplasmic protein TolB and the outer membrane protein Pal. They form a network linking the inner and outer membranes and the peptidoglycan layer.

It localises to the periplasm. Part of the Tol-Pal system, which plays a role in outer membrane invagination during cell division and is important for maintaining outer membrane integrity. In Burkholderia ambifaria (strain ATCC BAA-244 / DSM 16087 / CCUG 44356 / LMG 19182 / AMMD) (Burkholderia cepacia (strain AMMD)), this protein is Tol-Pal system protein TolB.